The chain runs to 199 residues: UPF0301 protein Daci_1578 (199 aa).

This sequence belongs to the UPF0301 (AlgH) family.

The protein is UPF0301 protein Daci_1578 of Delftia acidovorans (strain DSM 14801 / SPH-1).